Consider the following 480-residue polypeptide: ATP synthase subunit beta (480 aa).

An ATP-binding site is contributed by 166 to 173; that stretch reads GGAGVGKT.

This sequence belongs to the ATPase alpha/beta chains family. As to quaternary structure, F-type ATPases have 2 components, CF(1) - the catalytic core - and CF(0) - the membrane proton channel. CF(1) has five subunits: alpha(3), beta(3), gamma(1), delta(1), epsilon(1). CF(0) has three main subunits: a(1), b(2) and c(9-12). The alpha and beta chains form an alternating ring which encloses part of the gamma chain. CF(1) is attached to CF(0) by a central stalk formed by the gamma and epsilon chains, while a peripheral stalk is formed by the delta and b chains.

Its subcellular location is the cell membrane. It carries out the reaction ATP + H2O + 4 H(+)(in) = ADP + phosphate + 5 H(+)(out). Functionally, produces ATP from ADP in the presence of a proton gradient across the membrane. The catalytic sites are hosted primarily by the beta subunits. The chain is ATP synthase subunit beta from Streptomyces griseus subsp. griseus (strain JCM 4626 / CBS 651.72 / NBRC 13350 / KCC S-0626 / ISP 5235).